Here is a 319-residue protein sequence, read N- to C-terminus: Acetyl-coenzyme A carboxylase carboxyl transferase subunit alpha (319 aa).

Residues 35-296 enclose the CoA carboxyltransferase C-terminal domain; that stretch reads NIDEEVHRLR…KAQLLADLAD (262 aa).

It belongs to the AccA family. Acetyl-CoA carboxylase is a heterohexamer composed of biotin carboxyl carrier protein (AccB), biotin carboxylase (AccC) and two subunits each of ACCase subunit alpha (AccA) and ACCase subunit beta (AccD).

Its subcellular location is the cytoplasm. It carries out the reaction N(6)-carboxybiotinyl-L-lysyl-[protein] + acetyl-CoA = N(6)-biotinyl-L-lysyl-[protein] + malonyl-CoA. It functions in the pathway lipid metabolism; malonyl-CoA biosynthesis; malonyl-CoA from acetyl-CoA: step 1/1. In terms of biological role, component of the acetyl coenzyme A carboxylase (ACC) complex. First, biotin carboxylase catalyzes the carboxylation of biotin on its carrier protein (BCCP) and then the CO(2) group is transferred by the carboxyltransferase to acetyl-CoA to form malonyl-CoA. The protein is Acetyl-coenzyme A carboxylase carboxyl transferase subunit alpha of Shigella sonnei (strain Ss046).